The following is a 480-amino-acid chain: Glutamate--tRNA ligase (480 aa).

The 'HIGH' region signature appears at 9–19 (PSPTGNLHIGT). A 'KMSKS' region motif is present at residues 247-251 (KLSKR). ATP is bound at residue Lys-250.

This sequence belongs to the class-I aminoacyl-tRNA synthetase family. Glutamate--tRNA ligase type 1 subfamily. Monomer.

The protein resides in the cytoplasm. The enzyme catalyses tRNA(Glu) + L-glutamate + ATP = L-glutamyl-tRNA(Glu) + AMP + diphosphate. In terms of biological role, catalyzes the attachment of glutamate to tRNA(Glu) in a two-step reaction: glutamate is first activated by ATP to form Glu-AMP and then transferred to the acceptor end of tRNA(Glu). In Nostoc sp. (strain PCC 7120 / SAG 25.82 / UTEX 2576), this protein is Glutamate--tRNA ligase.